We begin with the raw amino-acid sequence, 224 residues long: Germin-like protein 8-4 (224 aa).

The signal sequence occupies residues 1 to 23 (MASSSSLYLLAALLALASWQAIA). An intrachain disulfide couples cysteine 33 to cysteine 48. Positions 70–213 (STMNKVGSNV…AFQVEKKVID (144 aa)) constitute a Cupin type-1 domain. The N-linked (GlcNAc...) asparagine glycan is linked to asparagine 78. Mn(2+) is bound by residues histidine 111, histidine 113, glutamate 118, and histidine 158.

The protein belongs to the germin family. In terms of assembly, oligomer (believed to be a pentamer but probably hexamer).

The protein resides in the secreted. It localises to the extracellular space. The protein localises to the apoplast. Its function is as follows. Plays a role in broad-spectrum disease resistance. Probably has no oxalate oxidase activity even if the active site is conserved. This is Germin-like protein 8-4 (GER1) from Oryza sativa subsp. japonica (Rice).